The primary structure comprises 88 residues: Small ribosomal subunit protein uS15 (88 aa).

It belongs to the universal ribosomal protein uS15 family. Part of the 30S ribosomal subunit. Forms a bridge to the 50S subunit in the 70S ribosome, contacting the 23S rRNA.

Its function is as follows. One of the primary rRNA binding proteins, it binds directly to 16S rRNA where it helps nucleate assembly of the platform of the 30S subunit by binding and bridging several RNA helices of the 16S rRNA. In terms of biological role, forms an intersubunit bridge (bridge B4) with the 23S rRNA of the 50S subunit in the ribosome. The polypeptide is Small ribosomal subunit protein uS15 (Metamycoplasma arthritidis (strain 158L3-1) (Mycoplasma arthritidis)).